Reading from the N-terminus, the 457-residue chain is UPF0328 protein ECU05_0030 (457 aa).

2 disordered regions span residues 1–112 and 157–183; these read MPRP…PTAT and VKSQ…NPRI. A compositionally biased stretch (basic and acidic residues) spans 74–94; that stretch reads HTEGCHTHEANPEPNTKHTET. The span at 102–112 shows a compositional bias: pro residues; the sequence is CPPPHPGPTAT.

This sequence belongs to the UPF0328 family.

The polypeptide is UPF0328 protein ECU05_0030 (Encephalitozoon cuniculi (strain GB-M1) (Microsporidian parasite)).